We begin with the raw amino-acid sequence, 194 residues long: Protein GrpE (194 aa).

A disordered region spans residues 1 to 40 (MSRKHHKEQEEIQEQETISAGAAETPAEETAAIPAATEAD). Low complexity predominate over residues 20–38 (AGAAETPAEETAAIPAATE).

This sequence belongs to the GrpE family. As to quaternary structure, homodimer.

Its subcellular location is the cytoplasm. Functionally, participates actively in the response to hyperosmotic and heat shock by preventing the aggregation of stress-denatured proteins, in association with DnaK and GrpE. It is the nucleotide exchange factor for DnaK and may function as a thermosensor. Unfolded proteins bind initially to DnaJ; upon interaction with the DnaJ-bound protein, DnaK hydrolyzes its bound ATP, resulting in the formation of a stable complex. GrpE releases ADP from DnaK; ATP binding to DnaK triggers the release of the substrate protein, thus completing the reaction cycle. Several rounds of ATP-dependent interactions between DnaJ, DnaK and GrpE are required for fully efficient folding. The chain is Protein GrpE from Chlorobaculum tepidum (strain ATCC 49652 / DSM 12025 / NBRC 103806 / TLS) (Chlorobium tepidum).